Consider the following 615-residue polypeptide: MAVLPLSGAIRLSRGDLVIETQTQDPWAKKLITQGTDKACADLDVQQIQALKMKCAMIMFAQYVQGNTFGQVVKMAEAVTDLAKKCTEVDRDNPNCRKPLDWIFLNTICQEDNLPRFTDCCAKKDPERNDCFLSLKNSSRGFISPFERPNAEAACKNYSEHRHSLPGYFIYEVSRRHPFLYAPTILSVAIHYDEMMKDCCRSAEDSTHNLEECFRRQAPKVVKPIREDGLRQEHTCGILKKFGERTIKALKLVQISQRFPKADFFTVTKLVSDIANMHKDCCRGDMLECMRDREEILHYVCTNQDVISSKIKKCCEKPLLQRSECIVNAENDDKPANLSPQVREFIEDKGICERFAQEKDTHLARFLYEYSRRHPEFSAQMLLRIGKGYEDLLDECCKTGSPDNCCSRGEEELKKHIYETESVMKTSCDIYKEKGDYYFQNEYIKFTKQMTTIGSKCCQLSQDKLLPCAEENVSLLVDLVLGEICRRHLTNPINPAVCHCCSSSYALRRPCMGKLEIDENYVPLSLTPDLFTFHEDLCTTEEEKLQHRKQEFGIPLLLSYPMLINLIKYKPQITQEQLTSITVAFTAMREQCCKEENREACFAKEVLVTLSPICS.

Positions 1-15 are cleaved as a signal peptide; the sequence is MAVLPLSGAIRLSRG. The short motif at 14–16 is the Cell attachment site element; that stretch reads RGD. Albumin domains lie at 27–218, 223–415, and 416–609; these read WAKK…RRQA, KPIR…ELKK, and HIYE…VLVT. 2 disulfides stabilise this stretch: cysteine 109-cysteine 121 and cysteine 120-cysteine 131. N-linked (GlcNAc...) asparagine glycans are attached at residues asparagine 137 and asparagine 157. 9 cysteine pairs are disulfide-bonded: cysteine 155–cysteine 200, cysteine 199–cysteine 213, cysteine 236–cysteine 282, cysteine 281–cysteine 289, cysteine 301–cysteine 315, cysteine 314–cysteine 325, cysteine 396–cysteine 405, cysteine 428–cysteine 458, and cysteine 457–cysteine 468. A Cell attachment site motif is present at residues 283 to 285; that stretch reads RGD. Asparagine 472 is a glycosylation site (N-linked (GlcNAc...) asparagine). 4 disulfides stabilise this stretch: cysteine 485–cysteine 501, cysteine 500–cysteine 511, cysteine 538–cysteine 593, and cysteine 592–cysteine 601.

Belongs to the ALB/AFP/VDB family. As to quaternary structure, dimeric and trimeric forms have been found in addition to the monomeric form. Post-translationally, sulfated.

Its subcellular location is the secreted. In terms of biological role, binds copper, nickel, and fatty acids as well as, and bilirubin less well than, serum albumin. The sequence is that of Alpha-fetoprotein (AFP) from Gallus gallus (Chicken).